Here is a 230-residue protein sequence, read N- to C-terminus: Ribonuclease 3 (230 aa).

One can recognise an RNase III domain in the interval 10 to 133; the sequence is DPRLQSRIGY…IIGAIYVDSN (124 aa). Mg(2+) is bound at residue Glu46. Asp50 is a catalytic residue. Mg(2+)-binding residues include Asp119 and Glu122. Glu122 is a catalytic residue. The DRBM domain maps to 161-230; the sequence is DPKSRLQEYL…AAEILKLLEQ (70 aa).

Belongs to the ribonuclease III family. In terms of assembly, homodimer. Mg(2+) serves as cofactor.

The protein resides in the cytoplasm. The catalysed reaction is Endonucleolytic cleavage to 5'-phosphomonoester.. In terms of biological role, digests double-stranded RNA. Involved in the processing of primary rRNA transcript to yield the immediate precursors to the large and small rRNAs (23S and 16S). Processes some mRNAs, and tRNAs when they are encoded in the rRNA operon. Processes pre-crRNA and tracrRNA of type II CRISPR loci if present in the organism. In Acinetobacter baylyi (strain ATCC 33305 / BD413 / ADP1), this protein is Ribonuclease 3.